The following is a 64-amino-acid chain: Probable cytochrome c oxidase subunit 5C-3 (64 aa).

Residues 15 to 34 (SVVKELVIGLTLGLAAGGLW) form a helical membrane-spanning segment.

This sequence belongs to the cytochrome c oxidase subunit 5C family.

It is found in the mitochondrion inner membrane. Its function is as follows. This protein is one of the nuclear-coded polypeptide chains of cytochrome c oxidase, the terminal oxidase in mitochondrial electron transport. The sequence is that of Probable cytochrome c oxidase subunit 5C-3 from Arabidopsis thaliana (Mouse-ear cress).